The sequence spans 797 residues: MAP/microtubule affinity-regulating kinase 3 (797 aa).

A disordered region spans residues 1–35; the sequence is MSTRTPLPTVNERDTENHISHGDGRQEVTSRTGRS. Over residues 11-28 the composition is skewed to basic and acidic residues; sequence NERDTENHISHGDGRQEV. The residue at position 42 (Ser42) is a Phosphoserine. The 252-residue stretch at 56-307 folds into the Protein kinase domain; that stretch reads YRLLKTIGKG…LEQIMKDRWI (252 aa). ATP is bound by residues 62–70 and Lys85; that span reads IGKGNFAKV. The Proton acceptor role is filled by Asp178. Position 211 is a phosphothreonine; by LKB1 (Thr211). A UBA domain is found at 326–365; sequence ISDQKRIDIMVGMGYSQEEIQESLSKMKYDEITATYLLLG. Phosphoserine occurs at positions 368, 374, 376, 380, 383, 400, 419, and 469. 2 disordered regions span residues 372 to 504 and 585 to 701; these read DASD…GMTR and PDQR…KPRS. The segment covering 374–385 has biased composition (low complexity); sequence SDSSSSSNLSLA. A compositionally biased stretch (polar residues) spans 391 to 400; that stretch reads SDLSNSTGQS. 2 stretches are compositionally biased toward polar residues: residues 492–504 and 585–602; these read VPSS…GMTR and PDQR…SATT. 2 positions are modified to phosphoserine: Ser593 and Ser596. Thr602 bears the Phosphothreonine mark. Position 617 is a phosphothreonine; by PKC/PRKCZ (Thr617). Phosphoserine occurs at positions 636, 651, and 654. A compositionally biased stretch (polar residues) spans 637–664; that stretch reads PSLSHEATPLSQTRSRGSTNLFSKLTSK. The segment covering 669–678 has biased composition (basic and acidic residues); sequence LPTEYERNGR. Ser687 carries the post-translational modification Phosphoserine. The span at 689–699 shows a compositional bias: basic and acidic residues; sequence EQKDENREAKP. The region spanning 748-797 is the KA1 domain; it reads DGHAESLVQWEMEVCKLPRLSLNGVRFKRISGTSIAFKNIASKIANELKL.

It belongs to the protein kinase superfamily. CAMK Ser/Thr protein kinase family. SNF1 subfamily. In terms of assembly, interacts with MAPT/TAU. Interacts with DLG5 (via coiled-coil domain). Interacts with STK3/MST2 and STK4/MST1 in the presence of DLG5. Interacts with YWHAB, YWHAG, YWHAQ and YWHAZ. Interacts with PKP2 (via N-terminus). Interacts with CDC25C. Interacts with KSR1. In terms of processing, phosphorylated at Thr-211 by STK11/LKB1 in complex with STE20-related adapter-alpha (STRADA) pseudo kinase and CAB39. Phosphorylation at Thr-617 by PRKCZ/aPKC inhibits the kinase activity.

It localises to the cell membrane. Its subcellular location is the cell projection. The protein localises to the dendrite. The protein resides in the cytoplasm. It catalyses the reaction L-seryl-[protein] + ATP = O-phospho-L-seryl-[protein] + ADP + H(+). It carries out the reaction L-threonyl-[protein] + ATP = O-phospho-L-threonyl-[protein] + ADP + H(+). Activated by phosphorylation on Thr-211. Inhibited by phosphorylation on Thr-617. Serine/threonine-protein kinase. Involved in the specific phosphorylation of microtubule-associated proteins for MAP2 and MAP4. Phosphorylates the microtubule-associated protein MAPT/TAU. Phosphorylates CDC25C on 'Ser-216'. Regulates localization and activity of some histone deacetylases by mediating phosphorylation of HDAC7, promoting subsequent interaction between HDAC7 and 14-3-3 and export from the nucleus. Regulates localization and activity of MITF by mediating its phosphorylation, promoting subsequent interaction between MITF and 14-3-3 and retention in the cytosol. Negatively regulates the Hippo signaling pathway and antagonizes the phosphorylation of LATS1. Cooperates with DLG5 to inhibit the kinase activity of STK3/MST2 toward LATS1. Phosphorylates PKP2 and KSR1. The sequence is that of MAP/microtubule affinity-regulating kinase 3 (Mark3) from Rattus norvegicus (Rat).